The sequence spans 534 residues: Probable protein kinase UbiB (534 aa).

Residues 23–43 (DLLFDLPLPWFLLALRFALPW) traverse the membrane as a helical segment. One can recognise a Protein kinase domain in the interval 125–492 (RFDIEPLASA…WHKRKDDWFL (368 aa)). Residues 131–139 (LASASVAQV) and Lys153 contribute to the ATP site. Asp288 acts as the Proton acceptor in catalysis. The next 2 helical transmembrane spans lie at 490 to 510 (WFLRLLGTAHLGGGAVLAAGG) and 512 to 532 (LHELGHWPAGIMIAVGLYLIV).

This sequence belongs to the ABC1 family. UbiB subfamily.

The protein localises to the cell inner membrane. It participates in cofactor biosynthesis; ubiquinone biosynthesis [regulation]. Functionally, is probably a protein kinase regulator of UbiI activity which is involved in aerobic coenzyme Q (ubiquinone) biosynthesis. The chain is Probable protein kinase UbiB from Pseudomonas fluorescens (strain ATCC BAA-477 / NRRL B-23932 / Pf-5).